A 208-amino-acid chain; its full sequence is Na(+)-translocating NADH-quinone reductase subunit D (208 aa).

A run of 5 helical transmembrane segments spans residues 42 to 62, 72 to 92, 103 to 123, 131 to 151, and 178 to 198; these read IVMG…ISLV, IIVQ…LLQA, VFVG…AFAM, LIDG…VATV, and NGLF…IWGL.

Belongs to the NqrDE/RnfAE family. Composed of six subunits; NqrA, NqrB, NqrC, NqrD, NqrE and NqrF.

It localises to the cell inner membrane. The enzyme catalyses a ubiquinone + n Na(+)(in) + NADH + H(+) = a ubiquinol + n Na(+)(out) + NAD(+). Functionally, NQR complex catalyzes the reduction of ubiquinone-1 to ubiquinol by two successive reactions, coupled with the transport of Na(+) ions from the cytoplasm to the periplasm. NqrA to NqrE are probably involved in the second step, the conversion of ubisemiquinone to ubiquinol. This Neisseria meningitidis serogroup B (strain ATCC BAA-335 / MC58) protein is Na(+)-translocating NADH-quinone reductase subunit D.